A 185-amino-acid chain; its full sequence is UPF0215 protein APE_0476.1 (185 aa).

It belongs to the UPF0215 family.

The polypeptide is UPF0215 protein APE_0476.1 (Aeropyrum pernix (strain ATCC 700893 / DSM 11879 / JCM 9820 / NBRC 100138 / K1)).